The primary structure comprises 155 residues: Large ribosomal subunit protein bL17 (155 aa).

This sequence belongs to the bacterial ribosomal protein bL17 family. In terms of assembly, part of the 50S ribosomal subunit. Contacts protein L32.

The sequence is that of Large ribosomal subunit protein bL17 from Bifidobacterium adolescentis (strain ATCC 15703 / DSM 20083 / NCTC 11814 / E194a).